The following is a 602-amino-acid chain: Lysine--tRNA ligase, chloroplastic/mitochondrial (602 aa).

The segment covering 50-62 (SSSSSSATTAETS) has biased composition (low complexity). The tract at residues 50 to 83 (SSSSSSATTAETSKPSGRNRRSASSSNSTSDREA) is disordered. The segment at residues 136 to 214 (VSIAGRVVAR…SICVNSFSIL (79 aa)) is a DNA-binding region (OB). Residues glycine 285 and glutamate 309 each coordinate substrate. ATP-binding positions include 331 to 333 (RNE) and 339 to 340 (HN). Substrate contacts are provided by glutamate 347 and tyrosine 349. Residues glutamate 492 and glutamate 499 each coordinate Ca(2+). 499 to 500 (EM) is a binding site for ATP. Substrate-binding residues include asparagine 502 and glutamate 506. The segment covering 524-543 (HNAKRAEAVRESPEPNAKKD) has biased composition (basic and acidic residues). The disordered stretch occupies residues 524–550 (HNAKRAEAVRESPEPNAKKDDDDDESY). 575 to 578 (GIDR) contributes to the ATP binding site.

This sequence belongs to the class-II aminoacyl-tRNA synthetase family. Requires Ca(2+) as cofactor.

It is found in the plastid. The protein localises to the chloroplast. The protein resides in the mitochondrion. The catalysed reaction is tRNA(Lys) + L-lysine + ATP = L-lysyl-tRNA(Lys) + AMP + diphosphate. In terms of biological role, catalyzes the specific attachment of an amino acid to its cognate tRNA in a 2 step reaction: the amino acid (AA) is first activated by ATP to form AA-AMP and then transferred to the acceptor end of the tRNA. The polypeptide is Lysine--tRNA ligase, chloroplastic/mitochondrial (Arabidopsis thaliana (Mouse-ear cress)).